A 419-amino-acid polypeptide reads, in one-letter code: 4-hydroxyphenylpyruvate dioxygenase (419 aa).

2 VOC domains span residues 37–185 (GYDH…LLSR) and 216–376 (RIDH…LFTR). Fe cation contacts are provided by H219, H302, and E387.

Belongs to the 4HPPD family. Fe cation serves as cofactor.

It catalyses the reaction 3-(4-hydroxyphenyl)pyruvate + O2 = homogentisate + CO2. Its pathway is amino-acid degradation; L-phenylalanine degradation; acetoacetate and fumarate from L-phenylalanine: step 3/6. This Pyricularia oryzae (strain 70-15 / ATCC MYA-4617 / FGSC 8958) (Rice blast fungus) protein is 4-hydroxyphenylpyruvate dioxygenase (HPD4).